The sequence spans 410 residues: Arginine biosynthesis bifunctional protein ArgJ (410 aa).

Thr160, Lys186, Thr197, Glu283, Asn405, and Thr410 together coordinate substrate. The Nucleophile role is filled by Thr197.

This sequence belongs to the ArgJ family. In terms of assembly, heterotetramer of two alpha and two beta chains.

It localises to the cytoplasm. It catalyses the reaction N(2)-acetyl-L-ornithine + L-glutamate = N-acetyl-L-glutamate + L-ornithine. The catalysed reaction is L-glutamate + acetyl-CoA = N-acetyl-L-glutamate + CoA + H(+). It participates in amino-acid biosynthesis; L-arginine biosynthesis; L-ornithine and N-acetyl-L-glutamate from L-glutamate and N(2)-acetyl-L-ornithine (cyclic): step 1/1. It functions in the pathway amino-acid biosynthesis; L-arginine biosynthesis; N(2)-acetyl-L-ornithine from L-glutamate: step 1/4. In terms of biological role, catalyzes two activities which are involved in the cyclic version of arginine biosynthesis: the synthesis of N-acetylglutamate from glutamate and acetyl-CoA as the acetyl donor, and of ornithine by transacetylation between N(2)-acetylornithine and glutamate. This is Arginine biosynthesis bifunctional protein ArgJ from Geobacillus kaustophilus (strain HTA426).